Here is a 124-residue protein sequence, read N- to C-terminus: Large ribosomal subunit protein uL22 (124 aa).

It belongs to the universal ribosomal protein uL22 family. Part of the 50S ribosomal subunit.

This protein binds specifically to 23S rRNA; its binding is stimulated by other ribosomal proteins, e.g. L4, L17, and L20. It is important during the early stages of 50S assembly. It makes multiple contacts with different domains of the 23S rRNA in the assembled 50S subunit and ribosome. Its function is as follows. The globular domain of the protein is located near the polypeptide exit tunnel on the outside of the subunit, while an extended beta-hairpin is found that lines the wall of the exit tunnel in the center of the 70S ribosome. This Campylobacter lari (strain RM2100 / D67 / ATCC BAA-1060) protein is Large ribosomal subunit protein uL22.